A 418-amino-acid chain; its full sequence is D-amino acid dehydrogenase (418 aa).

3 to 17 (VLILGSGVVGVATAY) is an FAD binding site.

The protein belongs to the DadA oxidoreductase family. It depends on FAD as a cofactor.

The enzyme catalyses a D-alpha-amino acid + A + H2O = a 2-oxocarboxylate + AH2 + NH4(+). The protein operates within amino-acid degradation; D-alanine degradation; NH(3) and pyruvate from D-alanine: step 1/1. Functionally, oxidative deamination of D-amino acids. The polypeptide is D-amino acid dehydrogenase (Granulibacter bethesdensis (strain ATCC BAA-1260 / CGDNIH1)).